Here is a 24-residue protein sequence, read N- to C-terminus: Brevinin-1Ecb (24 aa).

A disulfide bond links Cys-18 and Cys-24.

As to expression, expressed by the skin glands.

The protein localises to the secreted. Functionally, shows antibacterial activity against representative Gram-negative and Gram-positive bacterial species, and hemolytic activity. This Pelophylax ridibundus (Marsh frog) protein is Brevinin-1Ecb.